The sequence spans 362 residues: MNIFGTRLKFTSFGESHGVAVGCIIDGMPAGVKFDEEFLQNELDKRKGGSKFATPRKESDKAQVLSGVFEGYTTGHPIAIVVFNENAHSKDYDNLKDLFRPAHADFTYFYKYAIRDHRGGGRSSARESVARVAGGAVAAMLLREFGICVQSGVFGVGTFVSNLKEEEFDFEFAKKSEIFCLDPKLESDFKNEILNARNSKDSVGAAVFTKVSGMLVGLGEVLYDKLDSKLAHALMGINAVKAVEIGEGINASKMRGSCNNDALKDGKFLSNHSGGILGGISNGENLILKTYFKPTPSIFAKQESIDKFGNNLEFELKGRHDPCVGVRGSVVASAMVRLVLADCLLLNTSANLNNLKNAYGLK.

Position 46 (arginine 46) interacts with NADP(+). Residues 122-124, 238-239, glycine 278, 293-297, and arginine 319 each bind FMN; these read RSS, NA, and KPTPS.

The protein belongs to the chorismate synthase family. In terms of assembly, homotetramer. FMNH2 is required as a cofactor.

It carries out the reaction 5-O-(1-carboxyvinyl)-3-phosphoshikimate = chorismate + phosphate. It participates in metabolic intermediate biosynthesis; chorismate biosynthesis; chorismate from D-erythrose 4-phosphate and phosphoenolpyruvate: step 7/7. Catalyzes the anti-1,4-elimination of the C-3 phosphate and the C-6 proR hydrogen from 5-enolpyruvylshikimate-3-phosphate (EPSP) to yield chorismate, which is the branch point compound that serves as the starting substrate for the three terminal pathways of aromatic amino acid biosynthesis. This reaction introduces a second double bond into the aromatic ring system. This chain is Chorismate synthase, found in Campylobacter jejuni subsp. doylei (strain ATCC BAA-1458 / RM4099 / 269.97).